The following is a 103-amino-acid chain: Large ribosomal subunit protein bL21 (103 aa).

It belongs to the bacterial ribosomal protein bL21 family. In terms of assembly, part of the 50S ribosomal subunit. Contacts protein L20.

Its function is as follows. This protein binds to 23S rRNA in the presence of protein L20. In Clostridium botulinum (strain Alaska E43 / Type E3), this protein is Large ribosomal subunit protein bL21.